The primary structure comprises 391 residues: S-adenosylmethionine synthase (391 aa).

His14 contributes to the ATP binding site. Mg(2+) is bound at residue Asp16. Glu42 contributes to the K(+) binding site. L-methionine-binding residues include Glu55 and Gln98. Residues 98-108 form a flexible loop region; it reads QSADIAMGVDE. ATP-binding positions include 172–174, 238–239, Asp247, 253–254, Ala270, and Lys274; these read DGK, RF, and RK. Residue Asp247 coordinates L-methionine. Lys278 is an L-methionine binding site.

Belongs to the AdoMet synthase family. As to quaternary structure, homotetramer; dimer of dimers. Requires Mg(2+) as cofactor. It depends on K(+) as a cofactor.

It is found in the cytoplasm. The catalysed reaction is L-methionine + ATP + H2O = S-adenosyl-L-methionine + phosphate + diphosphate. It functions in the pathway amino-acid biosynthesis; S-adenosyl-L-methionine biosynthesis; S-adenosyl-L-methionine from L-methionine: step 1/1. Functionally, catalyzes the formation of S-adenosylmethionine (AdoMet) from methionine and ATP. The overall synthetic reaction is composed of two sequential steps, AdoMet formation and the subsequent tripolyphosphate hydrolysis which occurs prior to release of AdoMet from the enzyme. The polypeptide is S-adenosylmethionine synthase (Clostridium acetobutylicum (strain ATCC 824 / DSM 792 / JCM 1419 / IAM 19013 / LMG 5710 / NBRC 13948 / NRRL B-527 / VKM B-1787 / 2291 / W)).